A 316-amino-acid chain; its full sequence is tRNA dimethylallyltransferase (316 aa).

Residue 13–20 participates in ATP binding; that stretch reads GPTAVGKT. Position 15 to 20 (15 to 20) interacts with substrate; sequence TAVGKT. Residues 38-41 are interaction with substrate tRNA; sequence DSIQ.

The protein belongs to the IPP transferase family. In terms of assembly, monomer. The cofactor is Mg(2+).

The catalysed reaction is adenosine(37) in tRNA + dimethylallyl diphosphate = N(6)-dimethylallyladenosine(37) in tRNA + diphosphate. Its function is as follows. Catalyzes the transfer of a dimethylallyl group onto the adenine at position 37 in tRNAs that read codons beginning with uridine, leading to the formation of N6-(dimethylallyl)adenosine (i(6)A). The polypeptide is tRNA dimethylallyltransferase (Staphylococcus carnosus (strain TM300)).